We begin with the raw amino-acid sequence, 248 residues long: tRNA (guanine-N(1)-)-methyltransferase (248 aa).

Residues Gly-117 and 137-142 (IGDFVL) contribute to the S-adenosyl-L-methionine site.

Belongs to the RNA methyltransferase TrmD family. Homodimer.

It localises to the cytoplasm. The enzyme catalyses guanosine(37) in tRNA + S-adenosyl-L-methionine = N(1)-methylguanosine(37) in tRNA + S-adenosyl-L-homocysteine + H(+). In terms of biological role, specifically methylates guanosine-37 in various tRNAs. The protein is tRNA (guanine-N(1)-)-methyltransferase of Polynucleobacter asymbioticus (strain DSM 18221 / CIP 109841 / QLW-P1DMWA-1) (Polynucleobacter necessarius subsp. asymbioticus).